Reading from the N-terminus, the 167-residue chain is Endoribonuclease YbeY (167 aa).

Positions 132, 136, and 142 each coordinate Zn(2+).

Belongs to the endoribonuclease YbeY family. Zn(2+) is required as a cofactor.

Its subcellular location is the cytoplasm. Single strand-specific metallo-endoribonuclease involved in late-stage 70S ribosome quality control and in maturation of the 3' terminus of the 16S rRNA. This chain is Endoribonuclease YbeY, found in Clostridium beijerinckii (strain ATCC 51743 / NCIMB 8052) (Clostridium acetobutylicum).